Here is a 111-residue protein sequence, read N- to C-terminus: MVRTKANSVPGSYRKVVASRAPRKVLGSSTSAANSTPLSSRKAENKYAGGNPVCVRPTPKWQKGIGEFFSLSPKDSEKENRIPEEAGSSGLGKAKRKACPLPPDHTDDEKE.

Residues 1–10 (MVRTKANSVP) show a composition bias toward polar residues. The interval 1 to 111 (MVRTKANSVP…PPDHTDDEKE (111 aa)) is disordered. Phosphoserine is present on serine 8. Lysine 15 participates in a covalent cross-link: Glycyl lysine isopeptide (Lys-Gly) (interchain with G-Cter in ubiquitin). The D-box motif lies at 23-34 (RKVLGSSTSAAN). The residue at position 24 (lysine 24) is an N6-acetyllysine; alternate. Lysine 24 participates in a covalent cross-link: Glycyl lysine isopeptide (Lys-Gly) (interchain with G-Cter in ubiquitin); alternate. The span at 27–39 (GSSTSAANSTPLS) shows a compositional bias: polar residues. 3 positions are modified to phosphoserine: serine 28, serine 31, and serine 72. Positions 62–72 (QKGIGEFFSLS) match the PIP-box motif. Residues 74-84 (KDSEKENRIPE) show a composition bias toward basic and acidic residues. Positions 78–80 (KEN) match the KEN box motif. Residues 85 to 97 (EAGSSGLGKAKRK) carry the Initiation motif motif.

Interacts (when monoubiquitinated at Lys-15 and Lys-24) with PCNA. Interacts with isoform 2/p33ING1b of ING1. Interacts with BRCA1. In terms of processing, monoubiquitinated at Lys-15 and Lys-24 during normal S phase, promoting its association with PCNA. Also diubiquitinated at these 2 sites. Following DNA damage, monoubiquitin chains at Lys-15 and Lys-24 are probably extended, leading to disrupt the interaction with PCNA. Polyubiquitinated by the APC/C complex at the mitotic exit, leading to its degradation by the proteasome.

Its subcellular location is the nucleus. The protein localises to the cytoplasm. The protein resides in the perinuclear region. Its function is as follows. PCNA-binding protein that acts as a regulator of DNA repair during DNA replication. Following DNA damage, the interaction with PCNA is disrupted, facilitating the interaction between monoubiquitinated PCNA and the translesion DNA synthesis DNA polymerase eta (POLH) at stalled replisomes, facilitating the bypass of replication-fork-blocking lesions. Also acts as a regulator of centrosome number. This chain is PCNA-associated factor, found in Bos taurus (Bovine).